A 523-amino-acid chain; its full sequence is 2-isopropylmalate synthase (523 aa).

Residues 5–267 (VIIFDTTLRD…HTAINHQEIW (263 aa)) enclose the Pyruvate carboxyltransferase domain. Residues D14, H202, H204, and N238 each coordinate Mn(2+). Positions 392 to 523 (RLDYFSVQSG…QHNENNKETV (132 aa)) are regulatory domain.

Belongs to the alpha-IPM synthase/homocitrate synthase family. LeuA type 1 subfamily. Homodimer. Requires Mn(2+) as cofactor.

Its subcellular location is the cytoplasm. The enzyme catalyses 3-methyl-2-oxobutanoate + acetyl-CoA + H2O = (2S)-2-isopropylmalate + CoA + H(+). Its pathway is amino-acid biosynthesis; L-leucine biosynthesis; L-leucine from 3-methyl-2-oxobutanoate: step 1/4. Catalyzes the condensation of the acetyl group of acetyl-CoA with 3-methyl-2-oxobutanoate (2-ketoisovalerate) to form 3-carboxy-3-hydroxy-4-methylpentanoate (2-isopropylmalate). This Escherichia coli (strain K12 / MC4100 / BW2952) protein is 2-isopropylmalate synthase.